A 303-amino-acid polypeptide reads, in one-letter code: UDP-N-acetylenolpyruvoylglucosamine reductase (303 aa).

Positions 23 to 188 constitute an FAD-binding PCMH-type domain; it reads KVGGPADYLV…ISAKFALKPG (166 aa). R167 is a catalytic residue. S217 (proton donor) is an active-site residue. The active site involves E287.

Belongs to the MurB family. FAD serves as cofactor.

It is found in the cytoplasm. The catalysed reaction is UDP-N-acetyl-alpha-D-muramate + NADP(+) = UDP-N-acetyl-3-O-(1-carboxyvinyl)-alpha-D-glucosamine + NADPH + H(+). The protein operates within cell wall biogenesis; peptidoglycan biosynthesis. Its function is as follows. Cell wall formation. This is UDP-N-acetylenolpyruvoylglucosamine reductase from Streptococcus uberis (strain ATCC BAA-854 / 0140J).